A 110-amino-acid polypeptide reads, in one-letter code: Snake venom vascular endothelial growth factor toxin HF (110 aa).

Q1 bears the Pyrrolidone carboxylic acid mark. 3 disulfide bridges follow: C14–C56, C45–C91, and C49–C93.

Belongs to the PDGF/VEGF growth factor family. Snake venom VEGF subfamily. Homodimer; disulfide-linked. Interacts with VEGF receptor-2 (KDR) with high affinity. As to expression, expressed by the venom gland.

Its subcellular location is the secreted. Its function is as follows. Snake venom VEGFs that may contribute to venom dispersion and prey subjugation by inducing vascular permeability and hypotension. This protein induces an increase in capillary permeability after intradermal injection, as well as a drastic hypotensive effect after intravenous injection. The hypotension is mediated by nitric oxide (NO), which is produced by VEGF-activated endothelium NO synthase. Also induces angiogenesis in vitro, probably through VEGF receptor (KDR/VEGFR-2) signaling. The protein is Snake venom vascular endothelial growth factor toxin HF of Vipera aspis aspis (Aspic viper).